The primary structure comprises 1203 residues: DNA-directed RNA polymerase subunit beta' (1203 aa).

Zn(2+) is bound by residues cysteine 60, cysteine 62, cysteine 75, and cysteine 78. Mg(2+)-binding residues include aspartate 449, aspartate 451, and aspartate 453. Zn(2+) contacts are provided by cysteine 818, cysteine 892, cysteine 899, and cysteine 902.

Belongs to the RNA polymerase beta' chain family. The RNAP catalytic core consists of 2 alpha, 1 beta, 1 beta' and 1 omega subunit. When a sigma factor is associated with the core the holoenzyme is formed, which can initiate transcription. The cofactor is Mg(2+). Zn(2+) serves as cofactor.

It carries out the reaction RNA(n) + a ribonucleoside 5'-triphosphate = RNA(n+1) + diphosphate. In terms of biological role, DNA-dependent RNA polymerase catalyzes the transcription of DNA into RNA using the four ribonucleoside triphosphates as substrates. The sequence is that of DNA-directed RNA polymerase subunit beta' from Bacillus thuringiensis (strain Al Hakam).